Reading from the N-terminus, the 193-residue chain is ATP-dependent Clp protease proteolytic subunit (193 aa).

S98 (nucleophile) is an active-site residue. H123 is an active-site residue.

It belongs to the peptidase S14 family. In terms of assembly, fourteen ClpP subunits assemble into 2 heptameric rings which stack back to back to give a disk-like structure with a central cavity, resembling the structure of eukaryotic proteasomes.

The protein resides in the cytoplasm. It catalyses the reaction Hydrolysis of proteins to small peptides in the presence of ATP and magnesium. alpha-casein is the usual test substrate. In the absence of ATP, only oligopeptides shorter than five residues are hydrolyzed (such as succinyl-Leu-Tyr-|-NHMec, and Leu-Tyr-Leu-|-Tyr-Trp, in which cleavage of the -Tyr-|-Leu- and -Tyr-|-Trp bonds also occurs).. Its function is as follows. Cleaves peptides in various proteins in a process that requires ATP hydrolysis. Has a chymotrypsin-like activity. Plays a major role in the degradation of misfolded proteins. ClpXP is involved in the complete degradation of the Site-2 clipped anti-sigma-W factor RsiW. This results in the release of SigW and the transcription activation of the genes under the control of the sigma-W factor. In Oceanobacillus iheyensis (strain DSM 14371 / CIP 107618 / JCM 11309 / KCTC 3954 / HTE831), this protein is ATP-dependent Clp protease proteolytic subunit.